The chain runs to 605 residues: Insulin-like growth factor-binding protein complex acid labile subunit (605 aa).

The signal sequence occupies residues 1–27 (MALRKGGLALALLLLSWVALGPRSLEG). In terms of domain architecture, LRRNT spans 32–74 (TPGEAEGPACPATCACSYDDEVNELSVFCSSRNLTRLPDGIPG). 2 disulfides stabilise this stretch: C41–C47 and C45–C60. N-linked (GlcNAc...) asparagine glycans are attached at residues N64, N85, and N96. 19 LRR repeats span residues 75–96 (GTQA…AFRN), 99–120 (SLAF…ALLG), 123–144 (NLCH…TFAY), 147–168 (ALAL…LFEG), 171–192 (NLWD…AFRG), 195–216 (GLRE…LFSG), 219–240 (ELRE…VFAQ), 243–264 (RLQK…AFLG), 267–288 (ALRW…TFPG), 291–312 (GLRV…TFED), 315–336 (FLEE…SFEG), 339–360 (QLEV…AFLG), 363–384 (NVAV…VFRG), 387–408 (KLHS…TFAG), 411–432 (GLRR…SLWG), 435–456 (ELLE…LFQG), 459–480 (KLEY…ALGP), 483–504 (RAFW…LLAS), and 507–528 (RLRY…PPGL). An N-linked (GlcNAc...) asparagine glycan is attached at N368. A glycan (N-linked (GlcNAc...) asparagine) is linked at N515. In terms of domain architecture, LRRCT spans 536–605 (NPWDCSCPLK…DLGEAHFAPC (70 aa)). Disulfide bonds link C540–C583, C542–C605, and C566–C571. N-linked (GlcNAc...) asparagine glycosylation is present at N580.

In terms of assembly, forms a ternary complex with IGF1 and IGFBP3.

Its subcellular location is the secreted. The protein localises to the extracellular space. Involved in protein-protein interactions that result in protein complexes, receptor-ligand binding or cell adhesion. This Papio hamadryas (Hamadryas baboon) protein is Insulin-like growth factor-binding protein complex acid labile subunit (IGFALS).